Reading from the N-terminus, the 85-residue chain is Translation initiation factor IF-1 2 (85 aa).

The S1-like domain occupies 1-72 (MAKEELIEMQ…TKGRITFRHL (72 aa)).

Belongs to the IF-1 family. In terms of assembly, component of the 30S ribosomal translation pre-initiation complex which assembles on the 30S ribosome in the order IF-2 and IF-3, IF-1 and N-formylmethionyl-tRNA(fMet); mRNA recruitment can occur at any time during PIC assembly.

It localises to the cytoplasm. In terms of biological role, one of the essential components for the initiation of protein synthesis. Stabilizes the binding of IF-2 and IF-3 on the 30S subunit to which N-formylmethionyl-tRNA(fMet) subsequently binds. Helps modulate mRNA selection, yielding the 30S pre-initiation complex (PIC). Upon addition of the 50S ribosomal subunit IF-1, IF-2 and IF-3 are released leaving the mature 70S translation initiation complex. The protein is Translation initiation factor IF-1 2 of Paracidovorax citrulli (strain AAC00-1) (Acidovorax citrulli).